We begin with the raw amino-acid sequence, 229 residues long: Potassium/proton antiporter CemA (229 aa).

The next 3 membrane-spanning stretches (helical) occupy residues 6 to 26 (AFIPFLYLASIVFLPWWISLS), 114 to 134 (ILCFVILSGYSILGNEELLII), and 189 to 209 (IISGLVSTFPVILDTIFKYWI).

This sequence belongs to the CemA family.

The protein resides in the plastid. It localises to the chloroplast inner membrane. It carries out the reaction K(+)(in) + H(+)(out) = K(+)(out) + H(+)(in). Functionally, contributes to K(+)/H(+) antiport activity by supporting proton efflux to control proton extrusion and homeostasis in chloroplasts in a light-dependent manner to modulate photosynthesis. Prevents excessive induction of non-photochemical quenching (NPQ) under continuous-light conditions. Indirectly promotes efficient inorganic carbon uptake into chloroplasts. In Carica papaya (Papaya), this protein is Potassium/proton antiporter CemA.